We begin with the raw amino-acid sequence, 788 residues long: Probable potassium transporter 9 (788 aa).

The Cytoplasmic segment spans residues methionine 1–leucine 21. A helical membrane pass occupies residues leucine 22 to valine 42. The Extracellular portion of the chain corresponds to tyrosine 43–glutamate 59. A helical transmembrane segment spans residues isoleucine 60–valine 80. Over serine 81–leucine 151 the chain is Cytoplasmic. A helical transmembrane segment spans residues leucine 152–isoleucine 172. At serine 173–glutamate 191 the chain is on the extracellular side. A helical transmembrane segment spans residues tyrosine 192 to glycine 212. Residues threonine 213–arginine 215 lie on the Cytoplasmic side of the membrane. A helical membrane pass occupies residues valine 216–leucine 236. Topologically, residues tyrosine 237–lysine 264 are extracellular. A helical transmembrane segment spans residues serine 265–alanine 285. The Cytoplasmic portion of the chain corresponds to aspartate 286 to tyrosine 292. The helical transmembrane segment at serine 293–glycine 313 threads the bilayer. Topologically, residues glutamine 314 to proline 343 are extracellular. An N-linked (GlcNAc...) asparagine glycan is attached at asparagine 325. A helical transmembrane segment spans residues valine 344–phenylalanine 364. The Cytoplasmic portion of the chain corresponds to serine 365 to glutamine 391. The chain crosses the membrane as a helical span at residues isoleucine 392–phenylalanine 412. At arginine 413 to serine 422 the chain is on the extracellular side. N-linked (GlcNAc...) asparagine glycosylation occurs at asparagine 420. A helical transmembrane segment spans residues glycine 423–leucine 443. Residues cysteine 444–leucine 451 are Cytoplasmic-facing. A helical membrane pass occupies residues alanine 452 to isoleucine 472. At lysine 473–glutamate 476 the chain is on the extracellular side. The helical transmembrane segment at glycine 477–histidine 497 threads the bilayer. At threonine 498–leucine 788 the chain is on the cytoplasmic side.

Belongs to the HAK/KUP transporter (TC 2.A.72.3) family.

The protein resides in the membrane. In terms of biological role, high-affinity potassium transporter. The polypeptide is Probable potassium transporter 9 (HAK9) (Oryza sativa subsp. japonica (Rice)).